Consider the following 417-residue polypeptide: Pigment epithelium-derived factor (417 aa).

Residues 1–19 form the signal peptide; it reads MQALVLLLWTGALLGHGSS. The tract at residues 17-41 is disordered; the sequence is GSSQNVPSSSEGSPVPDSTGEPVEE. Polar residues predominate over residues 18–28; that stretch reads SSQNVPSSSEG. Pyrrolidone carboxylic acid is present on glutamine 20. Phosphoserine is present on serine 24. A glycan (N-linked (GlcNAc...) asparagine) is linked at asparagine 284.

The protein belongs to the serpin family. In terms of assembly, interacts with PNPLA2; this interaction stimulates the phospholipase A2 activity of PNPLA2. In terms of tissue distribution, highly expressed in the liver, gastric glandular mucosa and renal tubules. It is also expressed in the brain, heart, lung retina and testes.

The protein resides in the secreted. It localises to the melanosome. Its function is as follows. Neurotrophic protein; induces extensive neuronal differentiation in retinoblastoma cells. Potent inhibitor of angiogenesis. As it does not undergo the S (stressed) to R (relaxed) conformational transition characteristic of active serpins, it exhibits no serine protease inhibitory activity. The polypeptide is Pigment epithelium-derived factor (Serpinf1) (Mus musculus (Mouse)).